A 164-amino-acid polypeptide reads, in one-letter code: Protein-export protein SecB (164 aa).

Belongs to the SecB family. Homotetramer, a dimer of dimers. One homotetramer interacts with 1 SecA dimer.

The protein resides in the cytoplasm. In terms of biological role, one of the proteins required for the normal export of preproteins out of the cell cytoplasm. It is a molecular chaperone that binds to a subset of precursor proteins, maintaining them in a translocation-competent state. It also specifically binds to its receptor SecA. The protein is Protein-export protein SecB of Stutzerimonas stutzeri (strain A1501) (Pseudomonas stutzeri).